The chain runs to 344 residues: Protease HtpX homolog (344 aa).

Transmembrane regions (helical) follow at residues 8 to 28 (VALG…ATVA), 46 to 66 (ALTG…FVLV), and 74 to 94 (VSFL…TYVA). Position 172 (His-172) interacts with Zn(2+). Glu-173 is a catalytic residue. His-176 is a Zn(2+) binding site. 2 helical membrane passes run 183 to 203 (AIML…VTAV) and 220 to 240 (LAVG…VLAF). A Zn(2+)-binding site is contributed by Glu-245.

The protein belongs to the peptidase M48B family. Zn(2+) is required as a cofactor.

The protein localises to the cell membrane. This is Protease HtpX homolog from Pyrobaculum calidifontis (strain DSM 21063 / JCM 11548 / VA1).